The sequence spans 146 residues: Hemoglobin subunit beta (146 aa).

An N-acetylvaline modification is found at V1. In terms of domain architecture, Globin spans 2-146; it reads HLTADEKAAV…VATALAHKYH (145 aa). S44 carries the phosphoserine modification. K59 carries the N6-acetyllysine modification. H63 provides a ligand contact to heme b. K82 is modified (N6-acetyllysine). Residue H92 coordinates heme b. An S-nitrosocysteine modification is found at C93. The residue at position 144 (K144) is an N6-acetyllysine.

This sequence belongs to the globin family. As to quaternary structure, heterotetramer of two alpha chains and two beta chains. Red blood cells.

Functionally, involved in oxygen transport from the lung to the various peripheral tissues. The chain is Hemoglobin subunit beta (HBB) from Myotis velifer (Mouse-eared bat).